The chain runs to 343 residues: Holliday junction branch migration complex subunit RuvB (343 aa).

The segment at 1-182 (MRDELLNTPT…FGISNRLDYY (182 aa)) is large ATPase domain (RuvB-L). ATP contacts are provided by residues I21, R22, G63, K66, T67, T68, 129–131 (EDF), R172, Y182, and R219. A Mg(2+)-binding site is contributed by T67. The small ATPAse domain (RuvB-S) stretch occupies residues 183-253 (SAELLQRIII…LARKTLAALE (71 aa)). A head domain (RuvB-H) region spans residues 256–343 (EDGLDDMDKK…DGPLFQKGSS (88 aa)). The DNA site is built by R311 and R316.

Belongs to the RuvB family. As to quaternary structure, homohexamer. Forms an RuvA(8)-RuvB(12)-Holliday junction (HJ) complex. HJ DNA is sandwiched between 2 RuvA tetramers; dsDNA enters through RuvA and exits via RuvB. An RuvB hexamer assembles on each DNA strand where it exits the tetramer. Each RuvB hexamer is contacted by two RuvA subunits (via domain III) on 2 adjacent RuvB subunits; this complex drives branch migration. In the full resolvosome a probable DNA-RuvA(4)-RuvB(12)-RuvC(2) complex forms which resolves the HJ.

It is found in the cytoplasm. It catalyses the reaction ATP + H2O = ADP + phosphate + H(+). Functionally, the RuvA-RuvB-RuvC complex processes Holliday junction (HJ) DNA during genetic recombination and DNA repair, while the RuvA-RuvB complex plays an important role in the rescue of blocked DNA replication forks via replication fork reversal (RFR). RuvA specifically binds to HJ cruciform DNA, conferring on it an open structure. The RuvB hexamer acts as an ATP-dependent pump, pulling dsDNA into and through the RuvAB complex. RuvB forms 2 homohexamers on either side of HJ DNA bound by 1 or 2 RuvA tetramers; 4 subunits per hexamer contact DNA at a time. Coordinated motions by a converter formed by DNA-disengaged RuvB subunits stimulates ATP hydrolysis and nucleotide exchange. Immobilization of the converter enables RuvB to convert the ATP-contained energy into a lever motion, pulling 2 nucleotides of DNA out of the RuvA tetramer per ATP hydrolyzed, thus driving DNA branch migration. The RuvB motors rotate together with the DNA substrate, which together with the progressing nucleotide cycle form the mechanistic basis for DNA recombination by continuous HJ branch migration. Branch migration allows RuvC to scan DNA until it finds its consensus sequence, where it cleaves and resolves cruciform DNA. This is Holliday junction branch migration complex subunit RuvB from Prosthecochloris aestuarii (strain DSM 271 / SK 413).